Here is a 104-residue protein sequence, read N- to C-terminus: Large ribosomal subunit protein uL24 (104 aa).

Over residues 85–96 (IKRELGAKEKAR) the composition is skewed to basic and acidic residues. A disordered region spans residues 85–104 (IKRELGAKEKARADRRKTAK).

This sequence belongs to the universal ribosomal protein uL24 family. In terms of assembly, part of the 50S ribosomal subunit.

Its function is as follows. One of two assembly initiator proteins, it binds directly to the 5'-end of the 23S rRNA, where it nucleates assembly of the 50S subunit. Functionally, one of the proteins that surrounds the polypeptide exit tunnel on the outside of the subunit. This Anaeromyxobacter sp. (strain Fw109-5) protein is Large ribosomal subunit protein uL24.